The following is a 260-amino-acid chain: Ribosomal RNA small subunit methyltransferase J (260 aa).

S-adenosyl-L-methionine is bound by residues 101 to 102, 117 to 118, 153 to 154, and aspartate 176; these read RD, ER, and SS.

The protein belongs to the methyltransferase superfamily. RsmJ family.

The protein resides in the cytoplasm. The enzyme catalyses guanosine(1516) in 16S rRNA + S-adenosyl-L-methionine = N(2)-methylguanosine(1516) in 16S rRNA + S-adenosyl-L-homocysteine + H(+). In terms of biological role, specifically methylates the guanosine in position 1516 of 16S rRNA. The polypeptide is Ribosomal RNA small subunit methyltransferase J (Aliivibrio salmonicida (strain LFI1238) (Vibrio salmonicida (strain LFI1238))).